The primary structure comprises 159 residues: MGLFNISLLLTCLMVLAIFHSCEAQNSPQDYLAVHNDARAQVGVGPMSWDANLASRAQNYANSRAGDCNLIHSGAGENLAKGGGDFTGRAAVQLWVSERPDYNYATNQCVGGKMCGHYTQVVWRNSVRLGCGRARCNNGWWFISCNYDPVGNWVGERPY.

Positions 1–24 are cleaved as a signal peptide; sequence MGLFNISLLLTCLMVLAIFHSCEA. The residue at position 25 (Gln-25) is a Pyrrolidone carboxylic acid. The SCP domain maps to 32 to 147; that stretch reads LAVHNDARAQ…NGWWFISCNY (116 aa). Cystine bridges form between Cys-68/Cys-136, Cys-109/Cys-115, and Cys-131/Cys-145.

Belongs to the CRISP family.

Its function is as follows. Probably involved in the defense reaction of plants against pathogens. In Solanum lycopersicum (Tomato), this protein is Pathogenesis-related leaf protein 4.